The sequence spans 181 residues: UPF0232 protein MAP_0004 (181 aa).

Residues methionine 1–glycine 11 show a composition bias toward polar residues. 2 disordered regions span residues methionine 1 to leucine 70 and alanine 161 to glycine 181. Over residues leucine 18–arginine 39 the composition is skewed to basic and acidic residues. A compositionally biased stretch (low complexity) spans glycine 40–valine 50.

Belongs to the UPF0232 family.

This Mycolicibacterium paratuberculosis (strain ATCC BAA-968 / K-10) (Mycobacterium paratuberculosis) protein is UPF0232 protein MAP_0004.